The sequence spans 682 residues: Polycomb protein suz12-B (682 aa).

Residues 326 to 355 (DPSDPSTAPVAKPLSTRNSDTSTTESRIST) are disordered. Residues 340-354 (STRNSDTSTTESRIS) show a composition bias toward polar residues. A C2H2-type zinc finger spans residues 408–431 (LHCPWCTLNCRKLYSLLKHLKLSH). The VEFS-box stretch occupies residues 523-599 (RLYFHSDSCM…NQMSQASMLF (77 aa)).

The protein belongs to the VEFS (VRN2-EMF2-FIS2-SU(Z)12) family. As to quaternary structure, component of the prc2/eed-ezh2 complex.

It is found in the nucleus. Functionally, polycomb group (PcG) protein. Component of the prc2/eed-ezh2 complex, which methylates 'Lys-9' and 'Lys-27' of histone H3, leading to transcriptional repression of the affected target gene. This is Polycomb protein suz12-B (suz12b) from Danio rerio (Zebrafish).